The sequence spans 218 residues: Thiopurine S-methyltransferase (218 aa).

Residues Trp10, Leu45, Glu66, and Arg123 each contribute to the S-adenosyl-L-methionine site.

The protein belongs to the class I-like SAM-binding methyltransferase superfamily. TPMT family.

Its subcellular location is the cytoplasm. It carries out the reaction S-adenosyl-L-methionine + a thiopurine = S-adenosyl-L-homocysteine + a thiopurine S-methylether.. This is Thiopurine S-methyltransferase from Shewanella sp. (strain W3-18-1).